The chain runs to 58 residues: Microcin J25 (58 aa).

Positions 1-37 (MIKHFHFNKLSSGKKNNVPSPAKGVIQIKKSASQLTK) are excised as a propeptide. The isoglutamyl glycine isopeptide (Gly-Glu) cross-link spans 38 to 45 (GGAGHVPE).

It is found in the secreted. In terms of biological role, peptide antibiotic that functions through inhibition of the bacterial DNA-dependent RNA polymerase (RNAP). Inhibits transcription by binding deep within RNAP secondary channel, where it sterically blocks the folding of the trigger loop, which is essential for efficient catalysis. In addition, it also seems to restrict access of nucleotide substrates to the catalytic center, and shows a partially competitive mode of inhibition with them. Exhibits potent bacteriocidal activity against a range of Enterobacteriaceae, including several pathogenic E.coli, Salmonella and Shigella strains. Also acts on the cytoplasmic membrane of Salmonella newport, producing alteration of membrane permeability and disruption of the subsequent gradient dissipation, which inhibits several processes essential for cell viability, such as oxygen consumption. Induces bacterial filamentation in susceptible cells in a non-SOS-dependent way, but this phenotype may result from impaired transcription of genes coding for cell division proteins. The protein is Microcin J25 (mcjA) of Escherichia coli.